The chain runs to 301 residues: 4-hydroxy-tetrahydrodipicolinate synthase (301 aa).

Threonine 57 is a binding site for pyruvate. Tyrosine 145 acts as the Proton donor/acceptor in catalysis. Lysine 173 (schiff-base intermediate with substrate) is an active-site residue. Isoleucine 213 is a binding site for pyruvate.

Belongs to the DapA family. In terms of assembly, homotetramer; dimer of dimers.

It is found in the cytoplasm. The enzyme catalyses L-aspartate 4-semialdehyde + pyruvate = (2S,4S)-4-hydroxy-2,3,4,5-tetrahydrodipicolinate + H2O + H(+). It functions in the pathway amino-acid biosynthesis; L-lysine biosynthesis via DAP pathway; (S)-tetrahydrodipicolinate from L-aspartate: step 3/4. Functionally, catalyzes the condensation of (S)-aspartate-beta-semialdehyde [(S)-ASA] and pyruvate to 4-hydroxy-tetrahydrodipicolinate (HTPA). In Corynebacterium diphtheriae (strain ATCC 700971 / NCTC 13129 / Biotype gravis), this protein is 4-hydroxy-tetrahydrodipicolinate synthase.